The primary structure comprises 233 residues: ATP-dependent dethiobiotin synthetase BioD (233 aa).

12-17 is an ATP binding site; the sequence is GVGKTI. T16 serves as a coordination point for Mg(2+). K37 is a catalytic residue. S41 contributes to the substrate binding site. Residues D51, 112–115, and 202–204 each bind ATP; these read EGAG and PKL. The Mg(2+) site is built by D51 and E112.

Belongs to the dethiobiotin synthetase family. Homodimer. Requires Mg(2+) as cofactor.

The protein resides in the cytoplasm. It carries out the reaction (7R,8S)-7,8-diammoniononanoate + CO2 + ATP = (4R,5S)-dethiobiotin + ADP + phosphate + 3 H(+). Its pathway is cofactor biosynthesis; biotin biosynthesis; biotin from 7,8-diaminononanoate: step 1/2. Its function is as follows. Catalyzes a mechanistically unusual reaction, the ATP-dependent insertion of CO2 between the N7 and N8 nitrogen atoms of 7,8-diaminopelargonic acid (DAPA, also called 7,8-diammoniononanoate) to form a ureido ring. In Bacillus velezensis (strain DSM 23117 / BGSC 10A6 / LMG 26770 / FZB42) (Bacillus amyloliquefaciens subsp. plantarum), this protein is ATP-dependent dethiobiotin synthetase BioD.